Here is a 173-residue protein sequence, read N- to C-terminus: NADH-ubiquinone oxidoreductase chain 6 (173 aa).

5 helical membrane passes run 1–21 (MTYFVLFLGLCFVLGGLAVAS), 27–47 (YGVVGLVLASVAGCGWLLSLG), 48–68 (ASFVSLVLFMVYLGGMLVVFV), 87–107 (VIGYGMGFIVVLVVGVVISGF), and 139–159 (WGVGMFLAAGWGLLLTLFVVL).

This sequence belongs to the complex I subunit 6 family.

The protein localises to the mitochondrion membrane. The catalysed reaction is a ubiquinone + NADH + 5 H(+)(in) = a ubiquinol + NAD(+) + 4 H(+)(out). In terms of biological role, core subunit of the mitochondrial membrane respiratory chain NADH dehydrogenase (Complex I) that is believed to belong to the minimal assembly required for catalysis. Complex I functions in the transfer of electrons from NADH to the respiratory chain. The immediate electron acceptor for the enzyme is believed to be ubiquinone. The protein is NADH-ubiquinone oxidoreductase chain 6 (MT-ND6) of Brachyramphus marmoratus (Marbled murrelet).